The primary structure comprises 662 residues: Translation factor guf1, mitochondrial (662 aa).

A mitochondrion-targeting transit peptide spans 1-42; sequence MRGCLQLARWLSAAPNWPASSLLKAPGSSFATRLFTTTSSYK. The region spanning 64–244 is the tr-type G domain; it reads ERYRNFCIVA…TVVEKIPAPI (181 aa). GTP contacts are provided by residues 73–80, 137–141, and 191–194; these read AHVDHGKS, DTPGH, and NKVD.

The protein belongs to the TRAFAC class translation factor GTPase superfamily. Classic translation factor GTPase family. LepA subfamily.

Its subcellular location is the mitochondrion inner membrane. It catalyses the reaction GTP + H2O = GDP + phosphate + H(+). Promotes mitochondrial protein synthesis. May act as a fidelity factor of the translation reaction, by catalyzing a one-codon backward translocation of tRNAs on improperly translocated ribosomes. Binds to mitochondrial ribosomes in a GTP-dependent manner. The polypeptide is Translation factor guf1, mitochondrial (guf1) (Emericella nidulans (strain FGSC A4 / ATCC 38163 / CBS 112.46 / NRRL 194 / M139) (Aspergillus nidulans)).